The sequence spans 1529 residues: uncharacterized protein (1529 aa).

Over residues 1–11 (MDKNNNNNNSN) the composition is skewed to low complexity. 7 disordered regions span residues 1 to 85 (MDKN…SKGV), 335 to 371 (LLSN…WSSS), 660 to 694 (LPNL…TATA), 798 to 843 (NCNI…SSYS), 1016 to 1035 (SSLP…NTNN), 1334 to 1364 (QQQQ…QLQQ), and 1454 to 1497 (QQQV…SRLP). The span at 24 to 42 (QKRVQNPSFSSGQSRTVPS) shows a compositional bias: polar residues. Residues 51-79 (ISSSSSSSSISTTNNTTTTTTSGTGSTSS) show a composition bias toward low complexity. Positions 810 to 833 (NNNNNNNNNNNNNNNNNNNNNNNN) are enriched in low complexity. Polar residues-rich tracts occupy residues 834–843 (VLPRSNSSYS) and 1016–1027 (SSLPISQNLSDD). A compositionally biased stretch (low complexity) spans 1454 to 1494 (QQQVQTPSSPQTLASLLGNSSSNTLTSSSSTLSLNESSTLS).

This is an uncharacterized protein from Dictyostelium discoideum (Social amoeba).